Here is a 397-residue protein sequence, read N- to C-terminus: Acetate kinase 2 (397 aa).

Asn8 contributes to the Mg(2+) binding site. Lys15 is an ATP binding site. Arg89 contacts substrate. Asp146 (proton donor/acceptor) is an active-site residue. ATP-binding positions include 206–210 (HLGNG), 281–283 (DFR), and 329–333 (GVGEN). Glu380 provides a ligand contact to Mg(2+).

This sequence belongs to the acetokinase family. Homodimer. The cofactor is Mg(2+). Mn(2+) is required as a cofactor.

The protein localises to the cytoplasm. The enzyme catalyses acetate + ATP = acetyl phosphate + ADP. The protein operates within metabolic intermediate biosynthesis; acetyl-CoA biosynthesis; acetyl-CoA from acetate: step 1/2. Its function is as follows. Catalyzes the formation of acetyl phosphate from acetate and ATP. Can also catalyze the reverse reaction. This is Acetate kinase 2 from Listeria monocytogenes serovar 1/2a (strain ATCC BAA-679 / EGD-e).